Consider the following 107-residue polypeptide: Protein RnfH (107 aa).

The interval 82-107 (ARRKRAEKAKEEGRANKVTGGRPIER) is disordered.

Belongs to the UPF0125 (RnfH) family.

This is Protein RnfH from Pseudoalteromonas translucida (strain TAC 125).